A 59-amino-acid polypeptide reads, in one-letter code: CDRRFSRSDELTRHIRIHTGQKPFQCRICMRNFSRSDHLTTHIRTHTGEKPFACDICGR.

3 consecutive C2H2-type zinc fingers follow at residues 1-18, 24-46, and 52-59; these read CDRR…IRIH, FQCR…IRTH, and FACDICGR.

It belongs to the EGR C2H2-type zinc-finger protein family.

Its subcellular location is the nucleus. The protein resides in the cytoplasm. Transcriptional regulator. Recognizes and binds to the DNA sequence 5'-GCG(T/G)GGGCG-3'(EGR-site) in the promoter region of target genes. Binds double-stranded target DNA, irrespective of the cytosine methylation status. Regulates the transcription of numerous target genes, and thereby plays an important role in regulating the response to growth factors, DNA damage, and ischemia. Plays a role in the regulation of cell survival, proliferation and cell death. Mediates responses to ischemia and hypoxia; regulates the expression of proteins that are involved in inflammatory processes. Plays a role in regulating the expression of circadian clock genes. The protein is Early growth response protein 1 (EGR1) of Serinus canaria (Island canary).